The chain runs to 956 residues: Calsyntenin-3 (956 aa).

The first 19 residues, 1-19 (MTLLLLPLLLASLLASCSC), serve as a signal peptide directing secretion. Over 1–30 (MTLLLLPLLLASLLASCSCNKANKHKPWIE) the chain is Cytoplasmic. Residues 20 to 847 (NKANKHKPWI…SHRNSMIPSA (828 aa)) are Extracellular-facing. Cadherin domains follow at residues 29-145 (IEAE…APVF) and 146-246 (VERL…KPSW). The helical intramembrane region spans 31–51 (AEYQGIVMENDNTVLLNPPLF). Over 52–71 (ALDKDAPLRYAGEICGFRLH) the chain is Cytoplasmic. The segment at residues 72–94 (GSGVPFEAVILDKATGEGLIRAK) is an intramembrane region (helical). Residues 95–151 (EPVDCEAQKEHTFTIQAYDCGEGPDGANTKKSHKATVHVRVNDVNEFAPVFVERLYR) are Cytoplasmic-facing. The segment at residues 152–172 (AAVTEGKLYDRILRVEAIDGD) is an intramembrane region (helical). Over 173–255 (CSPQYSQICY…WQGWNKRIEY (83 aa)) the chain is Cytoplasmic. Residues 256-276 (APGAGSLALFPGIRLETCDEP) form a helical membrane-spanning segment. Residues 277 to 364 (LWNIQATIEL…PLGGPSGLGS (88 aa)) lie on the Lumenal side of the membrane. N-linked (GlcNAc...) asparagine glycans are attached at residues Asn299, Asn327, Asn347, Asn507, and Asn740. Residues 848 to 868 (ATLIIVVCVGFLVLMVVLGLV) traverse the membrane as a helical segment. Over 869–956 (RIHSLHRRVS…RIIETPPHRY (88 aa)) the chain is Cytoplasmic. The tract at residues 916–956 (QSCVTGAVGGQQEDEDSSDSEVADSPSSDERRIIETPPHRY) is disordered. Positions 927-937 (QEDEDSSDSEV) are enriched in acidic residues. Residues 943–956 (SDERRIIETPPHRY) show a composition bias toward basic and acidic residues.

Belongs to the calsyntenin family. As to quaternary structure, interacts (via cadherin domains) with both alpha and beta isoforms of neurexins (NRXN1, NRXN2 and NRXN3). Directly interacts with APBA2. Forms a tripartite complex with APBA2 and APP. Interacts with low affinity with KLC1. Interacts with SLC23A2/SVCT2. Interacts with CIDEA; inhibiting the lipid transferase activity of CIDEA. Interacts with CIDEC; inhibiting the lipid transferase activity of CIDEC. In terms of processing, proteolytically processed under normal cellular conditions. A primary zeta-cleavage generates a large extracellular (soluble) N-terminal domain (sAlc) and a short C-terminal transmembrane fragment (CTF1). A secondary cleavage catalyzed by gamma-secretase within the transmembrane domain releases the beta-Alc-beta chain in the extracellular milieu and produces an intracellular fragment (AlcICD). This processing is strongly suppressed in the tripartite complex formed with APBA2 and APP, which seems to prevent the association with gamma-secretase. Post-translationally, ubiquitinated: endoplasmic reticulum-localized protein is ubiquitinated and degraded by the endoplasmic reticulum-associated degradation (ERAD) pathway. According to PubMed:12498782, expressed predominantly in the brain and in kidney. Low levels in heart, skeletal muscle, liver, placenta, pancreas and lung. According to PubMed:12972431, predominant expression in brain, and only marginal in kidney. In brain, present throughout all cortical layers, highest levels in GABAergic neurons (based on morphology and distribution pattern). In terms of tissue distribution, expression is restricted to adipose tissue, with high expression in multilocular thermogenic adipocytes (brown adipose tissue).

It localises to the postsynaptic cell membrane. Its subcellular location is the endoplasmic reticulum membrane. The protein resides in the golgi apparatus membrane. It is found in the cell projection. The protein localises to the dendrite. It localises to the lipid droplet. Functionally, postsynaptic adhesion molecule that binds to presynaptic neurexins to mediate both excitatory and inhibitory synapse formation. Promotes synapse development by acting as a cell adhesion molecule at the postsynaptic membrane, which associates with both neurexin-alpha and neurexin-beta proteins at the presynaptic membrane. Regulates the balance between excitatory and inhibitory synapses by inhibiting formation of excitatory parallel-fiber synapses and promoting formation of inhibitory synapses in the same neuron. May also be involved in ascorbate (vitamin C) uptake via its interaction with SLC23A2/SVCT2. Complex formation with APBA2 and APP, stabilizes APP metabolism and enhances APBA2-mediated suppression of beta-APP40 secretion, due to the retardation of intracellular APP maturation. Its function is as follows. Adipose-specific isoform that plays a key role in adaptive thermogenesis. Facilitates the efficient use of stored triglyceride by promoting multilocular morphology of thermogenic adipocytes: acts by inhibiting the activity of CIDEA and CIDEC on lipid droplets, thereby preventing lipid droplet fusion and facilitating lipid utilization. May also participate in adaptive thermogenesis by promoting sympathetic innervation of thermogenic adipose tissue: acts by driving secretion of neurotrophic factor S100B from brown adipocytes, stimulating neurite outgrowth from sympathetic neurons. In Homo sapiens (Human), this protein is Calsyntenin-3.